The following is a 277-amino-acid chain: Ras suppressor protein 1 (277 aa).

The disordered stretch occupies residues 1–23; the sequence is MSKSLKKLVEESREKNQPEVDMS. An N-acetylserine modification is found at serine 2. Positions 7–23 are enriched in basic and acidic residues; it reads KLVEESREKNQPEVDMS. LRR repeat units follow at residues 41–63, 64–85, 87–109, 110–133, 135–156, 158–179, and 181–202; these read HITQLVLSHNKLTTVPPNIAELK, NLEVLNFFNNQIEELPTQISSL, KLKHLNLGMNRLNTLPRGFGSLP, ALEVLDLTYNNLNENSLPGNFFYL, TLRALYLSDNDFEILPPDIGKL, KLQILSLRDNDLISLPKEIGEL, and QLKELHIQGNRLTVLPPELGNL. The segment at 250–277 is disordered; the sequence is MQANPEPPKKNNDKSKKISRKPLAAKNK. Positions 256–265 are enriched in basic and acidic residues; sequence PPKKNNDKSK.

Potentially plays a role in the Ras signal transduction pathway. Capable of suppressing v-Ras transformation in vitro. The protein is Ras suppressor protein 1 (RSU1) of Bos taurus (Bovine).